The following is a 592-amino-acid chain: Laccase PFICI_06862 (592 aa).

The N-terminal stretch at 1-19 (MYIQTQFASLLLLAGTSLA) is a signal peptide. N-linked (GlcNAc...) asparagine glycosylation is present at asparagine 26. 2 Plastocyanin-like domains span residues 32–142 (QWSS…WIAP) and 173–350 (VVIS…RYPG). Cu cation-binding residues include histidine 78, histidine 80, histidine 123, and histidine 125. N-linked (GlcNAc...) asparagine glycosylation is found at asparagine 370, asparagine 407, and asparagine 454. The region spanning 445–563 (SDVQGGSMQN…AGQQVVLLEG (119 aa)) is the Plastocyanin-like 3 domain. Position 475 (histidine 475) interacts with Cu cation. A glycan (N-linked (GlcNAc...) asparagine) is linked at asparagine 524.

This sequence belongs to the multicopper oxidase family.

It is found in the cell surface. It participates in pigment biosynthesis; melanin biosynthesis. Its function is as follows. Laccase involved the biosynthesis of dihydroxynaphthalene (DHN)-melanin, a bluish-green pigment forming a dark layer in the conidial wall that protects the conidia from UV radiations. The first step of the pathway is the production of the pentaketide 1,3,6,8-tetrahydroxynaphthalene (1,3,6,8-THN or T4HN) by the polyketide synthase PfmaE though condensation of acetyl-CoA with malonyl-CoA. T4HN is not stable and easily oxidizes into the stable form flaviolin. T4HN is also substrate of the hydroxynaphthalene reductase PfmaG to yield scytalone. The scytalone dehydratase PfmaJ then reduces scytalone to 1,3,8-THN. 1,3,8-THN is then substrate of the hydroxynaphthalene reductase PfmaI to yield vermelone. Vermelone is further converted by the multicopper oxidase PfmaD to 1,8-DHN. Finally the laccase PFICI_06862 transforms 1,8-DHN to DHN-melanin. The roles of the 5-oxoprolinase PfmaA and the proline iminopeptidase PfmaB within the cluster have not been elucidated yet. In Pestalotiopsis fici (strain W106-1 / CGMCC3.15140), this protein is Laccase PFICI_06862.